Consider the following 217-residue polypeptide: MTNTEIFDKLRDAIVNQDVAGTPELCKEALALGIPALDIITKGLSVGMKIVGDKFEAAEIFLPQIMMSGKAMSNAMEVLTPELEKNKKEGDEAGLAITFVAEGDIHDIGHRLVTTMLGANGFQIFDLGVDVLNETVVEEAAKHKGEKVLLVGSALMTTSMLGQKDLMDRLKEQKLRDSVKCMFGGAPVSDKWIEEIGADATAENAAEAAKVALEVMK.

The B12-binding N-terminal domain maps to 1–91 (MTNTEIFDKL…ELEKNKKEGD (91 aa)). Residues 93 to 217 (AGLAITFVAE…AAKVALEVMK (125 aa)) form the B12-binding domain. Methylcob(III)alamin is bound at residue histidine 106.

It belongs to the methylamine corrinoid protein family. In terms of assembly, can form a complex with MtmB.

It functions in the pathway one-carbon metabolism; methanogenesis from methylamine. In terms of biological role, acts as a methyl group carrier between MtmB and MtbA. The protein is Monomethylamine corrinoid protein 2 (mtmC2) of Methanosarcina barkeri.